Here is a 165-residue protein sequence, read N- to C-terminus: Basic transcription factor 3 (165 aa).

Residues 33 to 97 enclose the NAC-A/B domain; sequence TTDDKRLQST…PQTKKLQDIL (65 aa). A compositionally biased stretch (polar residues) spans 120-134; that stretch reads QKQASGEGNAASATI. A disordered region spans residues 120–144; it reads QKQASGEGNAASATIQEEDDDDVPE.

The protein belongs to the NAC-beta family. In terms of assembly, part of the nascent polypeptide-associated complex (NAC). Interacts with EIF(ISO)4E.

The protein is Basic transcription factor 3 of Arabidopsis thaliana (Mouse-ear cress).